We begin with the raw amino-acid sequence, 189 residues long: Large ribosomal subunit protein uL6 (189 aa).

Belongs to the universal ribosomal protein uL6 family. Part of the 50S ribosomal subunit.

Its function is as follows. This protein binds to the 23S rRNA, and is important in its secondary structure. It is located near the subunit interface in the base of the L7/L12 stalk, and near the tRNA binding site of the peptidyltransferase center. In Bacteroides thetaiotaomicron (strain ATCC 29148 / DSM 2079 / JCM 5827 / CCUG 10774 / NCTC 10582 / VPI-5482 / E50), this protein is Large ribosomal subunit protein uL6.